The sequence spans 340 residues: Ketol-acid reductoisomerase (NADP(+)) (340 aa).

The region spanning 2–182 (AELYYDNQAD…GCTRAGVLRT (181 aa)) is the KARI N-terminal Rossmann domain. NADP(+) contacts are provided by residues 25–28 (FGSQ), S51, S53, and 83–86 (DIGQ). H108 is an active-site residue. G134 is a binding site for NADP(+). A KARI C-terminal knotted domain is found at 183 to 328 (TFAEETETDL…RELRRMMPFV (146 aa)). Mg(2+)-binding residues include D191, E195, E227, and E231. S252 serves as a coordination point for substrate.

The protein belongs to the ketol-acid reductoisomerase family. The cofactor is Mg(2+).

It carries out the reaction (2R)-2,3-dihydroxy-3-methylbutanoate + NADP(+) = (2S)-2-acetolactate + NADPH + H(+). The enzyme catalyses (2R,3R)-2,3-dihydroxy-3-methylpentanoate + NADP(+) = (S)-2-ethyl-2-hydroxy-3-oxobutanoate + NADPH + H(+). Its pathway is amino-acid biosynthesis; L-isoleucine biosynthesis; L-isoleucine from 2-oxobutanoate: step 2/4. It participates in amino-acid biosynthesis; L-valine biosynthesis; L-valine from pyruvate: step 2/4. In terms of biological role, involved in the biosynthesis of branched-chain amino acids (BCAA). Catalyzes an alkyl-migration followed by a ketol-acid reduction of (S)-2-acetolactate (S2AL) to yield (R)-2,3-dihydroxy-isovalerate. In the isomerase reaction, S2AL is rearranged via a Mg-dependent methyl migration to produce 3-hydroxy-3-methyl-2-ketobutyrate (HMKB). In the reductase reaction, this 2-ketoacid undergoes a metal-dependent reduction by NADPH to yield (R)-2,3-dihydroxy-isovalerate. In Chloroflexus aggregans (strain MD-66 / DSM 9485), this protein is Ketol-acid reductoisomerase (NADP(+)).